We begin with the raw amino-acid sequence, 36 residues long: F420-dependent NADP reductase (36 aa).

Residue 9-12 (TGNI) participates in NADP(+) binding.

Belongs to the F420-dependent NADP reductase family. Homotetramer.

It catalyses the reaction reduced coenzyme F420-(gamma-L-Glu)(n) + NADP(+) = oxidized coenzyme F420-(gamma-L-Glu)(n) + NADPH + 2 H(+). Its function is as follows. Catalyzes the reduction of NADP(+) with F420H(2) via hydride transfer, and the reverse reaction, i.e. the reduction of F420 with NADPH. In M.organophilum, an alcohol-fermenting methanogen containing an NADP-dependent alcohol dehydrogenase, is probably involved in the regeneration of F420H(2) required for CO(2) reduction to methane. Thus, during growth on alcohol and CO(2), the F420-dependent NADP reductase probably has the function of coupling the NADP-dependent oxidation of the alcohol to the aldehyde with the F420-dependent reduction of CO(2) to methane. The polypeptide is F420-dependent NADP reductase (fno) (Methanogenium organophilum).